We begin with the raw amino-acid sequence, 313 residues long: MKKKNTTPTPHDATFRQFLTQPDIARDFMELHLPAELRAICDLSTLKLESGSFVEDDLRQYFSDVLYSLKTTAGDGYIHVLVEHQSTPDKHMAFRLIRYAVAAMQRHLEAGHKKLPLVIPVLFYTGKRSPYPYSTRWLDEFDDTALADKLYSSAFPLVDVTVIPDDEIAGHRSMAALTLLQKHIHQRDLAELVDRLAPILLAGYLSSSQVISLVHYIVQAGETSDAEAFVRELAQRVPQHGDALMTIAQQLEQKGIEKGIQLGEQRGIEKGRSEGEREATLKIARTMLQNCIDRNTVMKMTGLTEDDLAQIRH.

It belongs to the Rpn/YhgA-like nuclease family.

A low activity DNA endonuclease probably yielding 3'-hydroxyl ends. Involved in RecA-independent recombination and horizontal gene transfer. In Salmonella typhimurium (strain LT2 / SGSC1412 / ATCC 700720), this protein is Recombination-promoting nuclease pSLT051.